Consider the following 291-residue polypeptide: Succinate--CoA ligase [ADP-forming] subunit alpha 1 (291 aa).

CoA is bound by residues 20–23, K46, and 99–101; these read TGFQ and VTE. Y162 contributes to the substrate binding site. Residue H249 is the Tele-phosphohistidine intermediate of the active site.

This sequence belongs to the succinate/malate CoA ligase alpha subunit family. In terms of assembly, heterotetramer of two alpha and two beta subunits.

It carries out the reaction succinate + ATP + CoA = succinyl-CoA + ADP + phosphate. It catalyses the reaction GTP + succinate + CoA = succinyl-CoA + GDP + phosphate. Its pathway is carbohydrate metabolism; tricarboxylic acid cycle; succinate from succinyl-CoA (ligase route): step 1/1. Succinyl-CoA synthetase functions in the citric acid cycle (TCA), coupling the hydrolysis of succinyl-CoA to the synthesis of either ATP or GTP and thus represents the only step of substrate-level phosphorylation in the TCA. The alpha subunit of the enzyme binds the substrates coenzyme A and phosphate, while succinate binding and nucleotide specificity is provided by the beta subunit. In Archaeoglobus fulgidus (strain ATCC 49558 / DSM 4304 / JCM 9628 / NBRC 100126 / VC-16), this protein is Succinate--CoA ligase [ADP-forming] subunit alpha 1.